Reading from the N-terminus, the 91-residue chain is Acylphosphatase (91 aa).

The Acylphosphatase-like domain occupies 4–91 (RYLIKVLGRV…DNEKSFKIVY (88 aa)). Residues Arg-19 and Asn-37 contribute to the active site.

The protein belongs to the acylphosphatase family.

The catalysed reaction is an acyl phosphate + H2O = a carboxylate + phosphate + H(+). The sequence is that of Acylphosphatase (acyP) from Clostridium acetobutylicum (strain ATCC 824 / DSM 792 / JCM 1419 / IAM 19013 / LMG 5710 / NBRC 13948 / NRRL B-527 / VKM B-1787 / 2291 / W).